The sequence spans 525 residues: Pre-mRNA-processing factor 19 homolog 2 (525 aa).

In terms of domain architecture, U-box spans 1–70 (MNCAISGEVP…PKTLHTASIP (70 aa)). WD repeat units follow at residues 220-261 (TNKP…STLT), 262-301 (GHSK…NYAC), 307-346 (DHSA…CLAQ), 351-390 (SKNV…NVAK), 393-431 (GHTG…NFKS), 433-469 (LSAD…AEWN), and 478-517 (SGTG…KANV). Residues 409-424 (FLATAAEDGVRLWDLR) carry the DWD box motif.

It belongs to the WD repeat PRP19 family. As to quaternary structure, homotetramer. Component of the multiprotein assembly MOS4-associated complex (MAC) at least composed of MOS4, CDC5, PRL1 and PRP19 which is related to the PRP19C/Prp19 complex/NTC/Nineteen complex identified in other organisms. Associated with the spliceosome.

The protein resides in the nucleus. It catalyses the reaction S-ubiquitinyl-[E2 ubiquitin-conjugating enzyme]-L-cysteine + [acceptor protein]-L-lysine = [E2 ubiquitin-conjugating enzyme]-L-cysteine + N(6)-ubiquitinyl-[acceptor protein]-L-lysine.. It participates in protein modification; protein ubiquitination. In terms of biological role, probable ubiquitin-protein ligase which is mainly involved pre-mRNA splicing and DNA repair. Component of the MAC complex that probably regulates defense responses through transcriptional control and thereby is essential for plant innate immunity. This Arabidopsis thaliana (Mouse-ear cress) protein is Pre-mRNA-processing factor 19 homolog 2 (PRP19B).